Here is a 143-residue protein sequence, read N- to C-terminus: Large ribosomal subunit protein uL16 (143 aa).

Belongs to the universal ribosomal protein uL16 family. Part of the 50S ribosomal subunit.

Its function is as follows. Binds 23S rRNA and is also seen to make contacts with the A and possibly P site tRNAs. The chain is Large ribosomal subunit protein uL16 from Caulobacter vibrioides (strain ATCC 19089 / CIP 103742 / CB 15) (Caulobacter crescentus).